We begin with the raw amino-acid sequence, 387 residues long: Beta-alanyl-dopamine/carcinine hydrolase (387 aa).

It belongs to the peptidase C45 family. In terms of assembly, the unprocessed protein forms homodimers. May form heterodimers composed of a 15 kDa alpha subunit and a 30 kDa beta subunit. The protein is synthesized as a 43 kDa precursor which is then self-processed into a 15 kDa alpha subunit and a 30 kDa beta subunit. Processing appears to be necessary for beta-alanyl-dopamine/carcinine hydrolase activity. The beta subunit carries the beta-alanyl-dopamine/carcinine hydrolase activity. Expressed in body, head, optic lobes and retina (at protein level). Expressed in photoreceptor cells R1-R6 in the lamina and in photoreceptor cells R7 and R8 in the medulla (at protein level).

Its subcellular location is the cell projection. The protein resides in the axon. It localises to the cytoplasm. It catalyses the reaction carcinine + H2O = histamine + beta-alanine. The catalysed reaction is beta-alanyl-dopamine + H2O = dopamine + beta-alanine. In the cuticle, catalyzes the hydrolysis of beta-alanyl-dopamine releasing dopamine and beta-alanine; dopamine is a metabolite involved in the pigmentation and sclerotization of the insect cuticle. In the photoreceptor cells, catalyzes the hydrolysis of carcinine releasing histamine and beta-alanine contributing to the recycling of the neurotransmitter histamine in the optical nerve system. Also, regulates the cuticular hydrocarbon composition in females. In Drosophila melanogaster (Fruit fly), this protein is Beta-alanyl-dopamine/carcinine hydrolase.